We begin with the raw amino-acid sequence, 147 residues long: 3-dehydroquinate dehydratase (147 aa).

Tyr24 (proton acceptor) is an active-site residue. Substrate is bound by residues Asn73, His79, and Asp86. The Proton donor role is filled by His99. Residues Leu100–Ser101 and Arg110 contribute to the substrate site.

This sequence belongs to the type-II 3-dehydroquinase family. Homododecamer.

The enzyme catalyses 3-dehydroquinate = 3-dehydroshikimate + H2O. The protein operates within metabolic intermediate biosynthesis; chorismate biosynthesis; chorismate from D-erythrose 4-phosphate and phosphoenolpyruvate: step 3/7. Its function is as follows. Catalyzes a trans-dehydration via an enolate intermediate. In Hyphomonas neptunium (strain ATCC 15444), this protein is 3-dehydroquinate dehydratase.